The primary structure comprises 192 residues: Spermatogenesis-associated protein 3 (192 aa).

The span at 1-15 (MKKVKKKRSEARRHR) shows a compositional bias: basic residues. 2 disordered regions span residues 1 to 65 (MKKV…TTSR) and 161 to 184 (SRKPSSHRNACPPSPRNCGCGSGG). Residues 19–59 (SQHASSNSTSQQPSPESTPQQPSPESTPQQPSPESTPQHSS) are compositionally biased toward low complexity.

The protein localises to the cell projection. The protein resides in the cilium. Its subcellular location is the flagellum. The chain is Spermatogenesis-associated protein 3 (SPATA3) from Homo sapiens (Human).